The primary structure comprises 198 residues: Angiopoietin-like protein 8 (198 aa).

Positions 1–15 (MAVLALCLLWTLASA) are cleaved as a signal peptide.

This sequence belongs to the ANGPTL8 family. In terms of assembly, interacts with ANGPTL3. In terms of processing, proteolytically cleaved at the N-terminus. Expressed in liver and fat. Enriched in white and brown adipose tissues.

Its subcellular location is the secreted. Functionally, hormone that acts as a blood lipid regulator by regulating serum triglyceride levels. May be involved in the metabolic transition between fasting and refeeding: required to direct fatty acids to adipose tissue for storage in the fed state. According to a report, may act by promoting ANGPTL3 cleavage. According to another study, not required for cleavage of ANGPTL3. The chain is Angiopoietin-like protein 8 from Mus musculus (Mouse).